Here is a 577-residue protein sequence, read N- to C-terminus: Torulene dioxygenase (577 aa).

Residues His-239, His-291, His-361, and His-570 each coordinate Fe(2+).

The protein belongs to the carotenoid oxygenase family. The cofactor is Fe(2+).

The protein localises to the cytoplasm. It is found in the cytosol. The catalysed reaction is torulene + O2 = 4'-apo-beta-carotenal + 3-methyl-2-butenal. The protein operates within carotenoid biosynthesis. Functionally, torulene dioxygenase; part of the pathway that mediates the biosynthesis of neurosporaxanthin, a carboxylic apocarotenoid acting as an essential protective pigments and leading to orange pigmentation. CarT mediates the cleavage of torulene into beta-apo-4'-carotenal, the aldehyde corresponding to the acidic neurosporaxanthin. Is also active on other monocyclic synthetic substrates such as beta-apo-8'-carotenal and beta-apo-10'-carotenal to produce beta-apo-14'-carotenal and retinal(beta-apo-15'-carotenal), respectively. Neurosporaxanthin is synthesized from geranyl-geranyl pyrophosphate (GGPP) through several enzymatic activities. Phytoene synthase activity performed by the bifunctional enzyme carAR first produces phytoene from geranyl-geranyl pyrophosphate (GGPP). The phytoene dehydrogenase carB then introduces 4 desaturations to lead to lycopene which is substrate of the carotene cyclase activity of carAR that leads to the production of gamma-carotene. CarB then performs a 5th desaturation reaction to yield torulene. Torulene is the substrate of the dioxidase carT that breaks the molecule, removing five carbon atoms to yield beta-apo-4'-carotenal, whereas the aldehyde dehydrogenase carD mediates the last step by converting beta-apo-4'-carotenal into neurosporaxanthin. In Fusarium fujikuroi (Bakanae and foot rot disease fungus), this protein is Torulene dioxygenase.